The following is a 1647-amino-acid chain: Putative RNA exonuclease pqe-1 (1647 aa).

Disordered stretches follow at residues 1-199 (MFNG…QVQN), 274-393 (QTPA…TSLP), 515-619 (MMQQ…KPVI), and 641-665 (QVKQEIPEVSSTSDATKSDAAPTAR). Composition is skewed to low complexity over residues 30–64 (GPSQNAQQQQQQASAPGTSSGGPSQAVSGASSGAS) and 99–131 (TQPQQRQQQQSQPQARQMSTQQAANLRKNAAAA). A compositionally biased stretch (polar residues) spans 143-170 (SREQGNAHQPTAGQIPQSSNQPAQQTHN). Composition is skewed to low complexity over residues 274–297 (QTPARGRPANAQLAQNAQQRNPQQ) and 515–526 (MMQQQAMQMQMQ). Residues 527–540 (NPPPVHQQPPPQQP) show a composition bias toward pro residues. Over residues 541 to 555 (PQQQRQKQQRSQPAP) the composition is skewed to low complexity. The span at 592 to 601 (SKIEPVDVKP) shows a compositional bias: basic and acidic residues. Over residues 650–664 (SSTSDATKSDAAPTA) the composition is skewed to low complexity. The stretch at 686-726 (SAKKFERMKAEAEDKEDMKKKIAALQEALFNIQEERRVEKE) forms a coiled coil. The span at 736 to 756 (AVPQNQPASSVQIAQVSTSES) shows a compositional bias: polar residues. Positions 736–1174 (AVPQNQPASS…LRNKKHTTEE (439 aa)) are disordered. A compositionally biased stretch (low complexity) spans 761–772 (TSEAAATETMTS). Residues 783–793 (TEGEQEEDEDE) are compositionally biased toward acidic residues. Positions 822-833 (RSDEKREKRHVS) are enriched in basic and acidic residues. The span at 878-905 (DNEDDDADSFVVGDDEPIEYEEEDEDDM) shows a compositional bias: acidic residues. Residues 977–992 (TPTASSSMSSSTLSYC) show a composition bias toward low complexity. Basic and acidic residues predominate over residues 1018–1031 (KTREENRERKRLAQ). Over residues 1038–1054 (SETTGVRRTLRSTQDNS) the composition is skewed to polar residues. Composition is skewed to basic and acidic residues over residues 1076-1088 (AKSSENRAKEKQK) and 1139-1174 (NHTEMLDKRNKESEEKRRKDRDELERLRNKKHTTEE). Positions 1142-1187 (EMLDKRNKESEEKRRKDRDELERLRNKKHTTEEEKIKMARLQNALK) form a coiled coil. The Exonuclease domain maps to 1477-1637 (RVYALDCEMV…IFYGLRNPES (161 aa)).

It belongs to the REXO1/REXO3 family. In terms of tissue distribution, expressed in the excretory canal, vulval cells, the intestine and in head and tail neurons including ASH, RIC and AIZ neurons.

The protein localises to the nucleus. Its function is as follows. Putative RNA exonuclease which protects neurons from the toxic effects of expanded poly-Q disease proteins. It is unknown whether this is via participation in the pathogenic mechanism underlying poly-Q-induced neurodegeneration or if it is by acting as a genetic modifier of the age of onset or progression of neurodegeneration. Regulates gene expression in neurons. The protein is Putative RNA exonuclease pqe-1 of Caenorhabditis elegans.